A 243-amino-acid chain; its full sequence is Terpene cyclase paxB (243 aa).

7 consecutive transmembrane segments (helical) span residues 23-43, 49-69, 78-98, 112-132, 134-154, 172-194, and 205-225; these read FVVGMGVGWIINYIGMVYISF, GMSIMPLCCNIAWELVYCLVF, GVFWMGLLINFGVMYAAITFS, ISLIFFVATMGFLSGHVALAL, IGPALAYSWGAVICQLLLSVG, LWASRFLGSTCTVGFAGLRWMYW, and LVLWSLVVFLSIDGFYGICFW.

Belongs to the paxB family.

The protein resides in the membrane. Its pathway is secondary metabolite biosynthesis. Functionally, terpene cyclase; part of the ATM2 gene cluster that mediates the biosynthesis of paxilline, a mycotoxin that acts as an inhibitor of mammalian maxi-K channels. PaxG, the geranylgeranyl diphosphate (GGPP) synthase is proposed to catalyze the first step in paxilline biosynthesis. Condensation of indole-3-glycerol phosphate with GGPP by paxC then forms 3-geranylgeranylindole (3-GGI), followed by epoxidation and cyclization of this intermediate (by paxM and paxB) to form paspaline. Paspaline is subsequently converted to 13-desoxypaxilline by paxP, the latter being then converted to paxilline by paxQ. Finally paxilline can be mono- and di-prenylated by paxD. The sequence is that of Terpene cyclase paxB from Penicillium paxilli.